Consider the following 202-residue polypeptide: Osteoclast-stimulating factor 1 (202 aa).

One can recognise an SH3 domain in the interval 12–71 (GQVKVFRALYTFEPRTPDELYFEEGDIIYISDMSDTNWWKGTCKGRTGLIPSNYVAEQAE). ANK repeat units follow at residues 72–101 (SIDN…GVNG), 105–135 (AGNT…ELNQ), and 139–168 (LGDT…RTDL).

It localises to the cytoplasm. Induces bone resorption, acting probably through a signaling cascade which results in the secretion of factor(s) enhancing osteoclast formation and activity. The protein is Osteoclast-stimulating factor 1 (OSTF1) of Gallus gallus (Chicken).